The primary structure comprises 173 residues: Bifunctional protein PyrR (173 aa).

A PRPP-binding motif is present at residues 93 to 105 (VILVDDVLYTGRT).

The protein belongs to the purine/pyrimidine phosphoribosyltransferase family. PyrR subfamily. Homodimer and homohexamer; in equilibrium.

The enzyme catalyses UMP + diphosphate = 5-phospho-alpha-D-ribose 1-diphosphate + uracil. In terms of biological role, regulates transcriptional attenuation of the pyrimidine nucleotide (pyr) operon by binding in a uridine-dependent manner to specific sites on pyr mRNA. This disrupts an antiterminator hairpin in the RNA and favors formation of a downstream transcription terminator, leading to a reduced expression of downstream genes. Its function is as follows. Also displays a weak uracil phosphoribosyltransferase activity which is not physiologically significant. The polypeptide is Bifunctional protein PyrR (Streptococcus suis (strain 05ZYH33)).